The chain runs to 254 residues: 5'-nucleotidase SurE (254 aa).

A divalent metal cation-binding residues include Asp8, Asp9, Ser38, and Asn91.

It belongs to the SurE nucleotidase family. A divalent metal cation serves as cofactor.

It is found in the cytoplasm. The enzyme catalyses a ribonucleoside 5'-phosphate + H2O = a ribonucleoside + phosphate. Nucleotidase that shows phosphatase activity on nucleoside 5'-monophosphates. The chain is 5'-nucleotidase SurE from Anaeromyxobacter dehalogenans (strain 2CP-1 / ATCC BAA-258).